The following is a 430-amino-acid chain: Enolase (430 aa).

A (2R)-2-phosphoglycerate-binding site is contributed by Gln-167. Glu-209 serves as the catalytic Proton donor. Mg(2+) is bound by residues Asp-246, Glu-287, and Asp-314. 4 residues coordinate (2R)-2-phosphoglycerate: Lys-339, Arg-368, Ser-369, and Lys-390. Catalysis depends on Lys-339, which acts as the Proton acceptor.

It belongs to the enolase family. Mg(2+) is required as a cofactor.

Its subcellular location is the cytoplasm. It is found in the secreted. The protein localises to the cell surface. It carries out the reaction (2R)-2-phosphoglycerate = phosphoenolpyruvate + H2O. Its pathway is carbohydrate degradation; glycolysis; pyruvate from D-glyceraldehyde 3-phosphate: step 4/5. Its function is as follows. Catalyzes the reversible conversion of 2-phosphoglycerate (2-PG) into phosphoenolpyruvate (PEP). It is essential for the degradation of carbohydrates via glycolysis. The polypeptide is Enolase (Prochlorococcus marinus (strain MIT 9215)).